Reading from the N-terminus, the 283-residue chain is DegV domain-containing protein lmo2514 (283 aa).

Residues 5 to 282 enclose the DegV domain; the sequence is IAVVTDSTTY…EGALGLTWSI (278 aa). Hexadecanoate contacts are provided by Ser-63 and Ser-96.

Functionally, may bind long-chain fatty acids, such as palmitate, and may play a role in lipid transport or fatty acid metabolism. The chain is DegV domain-containing protein lmo2514 from Listeria monocytogenes serovar 1/2a (strain ATCC BAA-679 / EGD-e).